The chain runs to 869 residues: Dynamin-3 (869 aa).

One can recognise a Dynamin-type G domain in the interval Leu-28 to Pro-294. The G1 motif stretch occupies residues Gly-38–Ser-45. Gly-38–Ser-46 provides a ligand contact to GTP. The interval Val-64–Arg-66 is G2 motif. Positions Asp-136–Gly-139 are G3 motif. Residues Thr-205–Asp-208 are G4 motif. Thr-205 to Asp-211 contacts GTP. Residue Tyr-231 is modified to Phosphotyrosine. Positions Val-235 to Ser-238 are G5 motif. Asn-236 to Gln-239 contributes to the GTP binding site. Lys-299 is modified (N6-acetyllysine). The PH domain occupies Ile-525–Val-631. Tyr-603 carries the phosphotyrosine modification. Lys-604 carries the N6-acetyllysine modification. The 92-residue stretch at Val-659–Val-750 folds into the GED domain. Residues Thr-752–Asp-869 are disordered. 2 positions are modified to phosphoserine: Ser-769 and Ser-773. A compositionally biased stretch (low complexity) spans Thr-775–Ala-796. Composition is skewed to pro residues over residues Pro-797–Pro-822 and Pro-832–Thr-855. Ser-853 carries the post-translational modification Phosphoserine.

It belongs to the TRAFAC class dynamin-like GTPase superfamily. Dynamin/Fzo/YdjA family. Isoform-specific expression in germ-cell-depleted testis (Sertoli cells), brain (peripheral sensory neurons), lung and heart.

Its subcellular location is the cytoplasm. It is found in the cytoskeleton. The protein resides in the cytoplasmic vesicle. It localises to the golgi apparatus. The catalysed reaction is GTP + H2O = GDP + phosphate + H(+). Its function is as follows. Microtubule-associated force-producing protein involved in producing microtubule bundles and able to bind and hydrolyze GTP. Most probably involved in vesicular trafficking processes, in particular endocytosis. This Rattus norvegicus (Rat) protein is Dynamin-3 (Dnm3).